Consider the following 311-residue polypeptide: MANPLYQKHIISINDLSRDDLNLVLATAAKLKANPQPELLKHKVIASCFFEASTRTRLSFETSMHRLGASVVGFSDSANTSLGKKGETLADTISVISTYVDAIVMRHPQEGAARLATEFSGQVPVLNAGDGSNQHPTQTLLDLFTIQETQGRLDNLHIAMVGDLKYGRTVHSLTQALAKFSGNRFYFIAPDALAMPQYILDMLDEKGMAWSPHGSIEEVMADVDILYMTRVQKERLDPSEYANVKAQFVLRASDLNGARENMKVLHPLPRIDEITTDVDKTPHAWYFQQAGNGIFARQALLALVLNSELSL.

Carbamoyl phosphate is bound by residues Arg-55 and Thr-56. Residue Lys-85 coordinates L-aspartate. The carbamoyl phosphate site is built by Arg-106, His-135, and Gln-138. L-aspartate contacts are provided by Arg-168 and Arg-230. Residues Leu-268 and Pro-269 each contribute to the carbamoyl phosphate site.

Belongs to the aspartate/ornithine carbamoyltransferase superfamily. ATCase family. As to quaternary structure, heterododecamer (2C3:3R2) of six catalytic PyrB chains organized as two trimers (C3), and six regulatory PyrI chains organized as three dimers (R2).

It carries out the reaction carbamoyl phosphate + L-aspartate = N-carbamoyl-L-aspartate + phosphate + H(+). It functions in the pathway pyrimidine metabolism; UMP biosynthesis via de novo pathway; (S)-dihydroorotate from bicarbonate: step 2/3. Its function is as follows. Catalyzes the condensation of carbamoyl phosphate and aspartate to form carbamoyl aspartate and inorganic phosphate, the committed step in the de novo pyrimidine nucleotide biosynthesis pathway. The polypeptide is Aspartate carbamoyltransferase catalytic subunit (Salmonella paratyphi C (strain RKS4594)).